Reading from the N-terminus, the 242-residue chain is Uridylate kinase (242 aa).

Residue 15–18 (KLSG) coordinates ATP. Residues 23–28 (GDEGFG) form an involved in allosteric activation by GTP region. Glycine 57 contributes to the UMP binding site. Positions 58 and 62 each coordinate ATP. UMP contacts are provided by residues aspartate 77 and 138-145 (TGNPFCTT). Threonine 165, tyrosine 171, and aspartate 174 together coordinate ATP.

It belongs to the UMP kinase family. As to quaternary structure, homohexamer.

It localises to the cytoplasm. It carries out the reaction UMP + ATP = UDP + ADP. It participates in pyrimidine metabolism; CTP biosynthesis via de novo pathway; UDP from UMP (UMPK route): step 1/1. With respect to regulation, allosterically activated by GTP. Inhibited by UTP. Catalyzes the reversible phosphorylation of UMP to UDP. In Shewanella sp. (strain ANA-3), this protein is Uridylate kinase.